Reading from the N-terminus, the 146-residue chain is Large-conductance mechanosensitive channel (146 aa).

Helical transmembrane passes span 21–41 (VGII…ADLI), 44–64 (IIGL…LGDG), and 83–103 (GSFI…FLLV).

It belongs to the MscL family. Homopentamer.

It localises to the cell inner membrane. In terms of biological role, channel that opens in response to stretch forces in the membrane lipid bilayer. May participate in the regulation of osmotic pressure changes within the cell. This is Large-conductance mechanosensitive channel from Cereibacter sphaeroides (strain ATCC 17023 / DSM 158 / JCM 6121 / CCUG 31486 / LMG 2827 / NBRC 12203 / NCIMB 8253 / ATH 2.4.1.) (Rhodobacter sphaeroides).